Here is an 88-residue protein sequence, read N- to C-terminus: Large ribosomal subunit protein bL31B (88 aa).

It belongs to the bacterial ribosomal protein bL31 family. Type B subfamily. In terms of assembly, part of the 50S ribosomal subunit.

This is Large ribosomal subunit protein bL31B from Leuconostoc mesenteroides subsp. mesenteroides (strain ATCC 8293 / DSM 20343 / BCRC 11652 / CCM 1803 / JCM 6124 / NCDO 523 / NBRC 100496 / NCIMB 8023 / NCTC 12954 / NRRL B-1118 / 37Y).